The sequence spans 80 residues: Cell division topological specificity factor (80 aa).

This sequence belongs to the MinE family.

Prevents the cell division inhibition by proteins MinC and MinD at internal division sites while permitting inhibition at polar sites. This ensures cell division at the proper site by restricting the formation of a division septum at the midpoint of the long axis of the cell. This Wolinella succinogenes (strain ATCC 29543 / DSM 1740 / CCUG 13145 / JCM 31913 / LMG 7466 / NCTC 11488 / FDC 602W) (Vibrio succinogenes) protein is Cell division topological specificity factor.